We begin with the raw amino-acid sequence, 472 residues long: Zinc finger and BTB domain-containing protein 18.2 (472 aa).

In terms of domain architecture, BTB spans 24 to 91 (CDCTVLVGEA…MYEGKLEFSN (68 aa)). Positions 127-149 (KIIDDGEKDDKPVDSEEHHEHSF) are enriched in basic and acidic residues. 3 disordered regions span residues 127-155 (KIIDDGEKDDKPVDSEEHHEHSFDASQQK), 197-236 (AGKTKANDSSPSSPLSQRSANHTHPPSDRDGALDLSFKPM), and 269-334 (DLLS…LSTS). Residues 205 to 215 (SSPSSPLSQRS) are compositionally biased toward low complexity. Residues 279 to 288 (AKSPKSQQVG) are compositionally biased toward polar residues. Positions 309–319 (HTREDDLYQDR) are enriched in basic and acidic residues. C2H2-type zinc fingers lie at residues 344 to 366 (CICPLCSKVFPSPHILQLHLSSH), 384 to 406 (PTCTICGKTFSCMYTLKRHERTH), 412 to 434 (FTCGQCGKSFQYSHNLSRHAVVH), and 440 to 463 (HACKWCERRFTQSGDLYRHIRKFH).

This sequence belongs to the krueppel C2H2-type zinc-finger protein family. ZBTB18 subfamily.

The protein resides in the nucleus. Its function is as follows. Transcriptional repressor that plays a role in various developmental processes. Specifically binds the consensus DNA sequence 5'-[AC]ACATCTG[GT][AC]-3' which contains the E box core, and acts by recruiting chromatin remodeling multiprotein complexes. This is Zinc finger and BTB domain-containing protein 18.2 (zbtb18.2) from Xenopus laevis (African clawed frog).